The sequence spans 66 residues: Large ribosomal subunit protein bL33c (66 aa).

The protein belongs to the bacterial ribosomal protein bL33 family.

The protein localises to the plastid. The polypeptide is Large ribosomal subunit protein bL33c (Cuscuta gronovii (Common dodder)).